The chain runs to 47 residues: uncharacterized protein (47 aa).

A helical membrane pass occupies residues 28 to 45 (VMIWGCLPYFLYVLIRMF).

It is found in the cell membrane. This is an uncharacterized protein from Bacillus subtilis (strain 168).